We begin with the raw amino-acid sequence, 399 residues long: GDP-D-glucose phosphorylase 1 (399 aa).

The active-site Tele-GMP-histidine intermediate is His237.

This sequence belongs to the GDPGP1 family.

The protein resides in the cytoplasm. The catalysed reaction is GDP-alpha-D-glucose + phosphate = alpha-D-glucose 1-phosphate + GDP + H(+). Its function is as follows. Specific and highly efficient GDP-D-glucose phosphorylase regulating the levels of GDP-D-glucose in cells. The chain is GDP-D-glucose phosphorylase 1 (gdpgp1) from Xenopus laevis (African clawed frog).